The primary structure comprises 214 residues: Putative ankyrin repeat protein RF_1081 (214 aa).

Over residues 1–14 (MRKQQIPTLSTSAL) the composition is skewed to polar residues. Residues 1–32 (MRKQQIPTLSTSALDKSPGPGSPDSDIEMKST) form a disordered region. Residues 67–135 (NPNALLHEAA…EEPILVTKKD (69 aa)) form an ANK repeat.

The sequence is that of Putative ankyrin repeat protein RF_1081 from Rickettsia felis (strain ATCC VR-1525 / URRWXCal2) (Rickettsia azadi).